The sequence spans 275 residues: Translation initiation factor 2 subunit alpha (275 aa).

The region spanning 12-83 is the S1 motif domain; sequence GELVVATVKR…KKGHIDLSLR (72 aa).

Belongs to the eIF-2-alpha family. In terms of assembly, heterotrimer composed of an alpha, a beta and a gamma chain.

Its function is as follows. eIF-2 functions in the early steps of protein synthesis by forming a ternary complex with GTP and initiator tRNA. The chain is Translation initiation factor 2 subunit alpha from Pyrococcus furiosus (strain ATCC 43587 / DSM 3638 / JCM 8422 / Vc1).